A 703-amino-acid chain; its full sequence is Polyribonucleotide nucleotidyltransferase (703 aa).

Positions 486 and 492 each coordinate Mg(2+). A KH domain is found at 553–614; that stretch reads PRITTIWIKP…AACDAAIQMI (62 aa). The 69-residue stretch at 624–692 folds into the S1 motif domain; that stretch reads GKLYMGTVKK…KQGKIKLSRK (69 aa).

This sequence belongs to the polyribonucleotide nucleotidyltransferase family. It depends on Mg(2+) as a cofactor.

The protein localises to the cytoplasm. It carries out the reaction RNA(n+1) + phosphate = RNA(n) + a ribonucleoside 5'-diphosphate. Functionally, involved in mRNA degradation. Catalyzes the phosphorolysis of single-stranded polyribonucleotides processively in the 3'- to 5'-direction. The sequence is that of Polyribonucleotide nucleotidyltransferase from Trichlorobacter lovleyi (strain ATCC BAA-1151 / DSM 17278 / SZ) (Geobacter lovleyi).